We begin with the raw amino-acid sequence, 423 residues long: Serine hydroxymethyltransferase (423 aa).

119 to 121 (GHI) is a binding site for (6S)-5,6,7,8-tetrahydrofolate. The residue at position 225 (Lys-225) is an N6-(pyridoxal phosphate)lysine.

The protein belongs to the SHMT family. As to quaternary structure, homodimer. The cofactor is pyridoxal 5'-phosphate.

The protein localises to the cytoplasm. The catalysed reaction is (6R)-5,10-methylene-5,6,7,8-tetrahydrofolate + glycine + H2O = (6S)-5,6,7,8-tetrahydrofolate + L-serine. It functions in the pathway one-carbon metabolism; tetrahydrofolate interconversion. Its pathway is amino-acid biosynthesis; glycine biosynthesis; glycine from L-serine: step 1/1. Catalyzes the reversible interconversion of serine and glycine with tetrahydrofolate (THF) serving as the one-carbon carrier. Also exhibits THF-independent aldolase activity toward beta-hydroxyamino acids, producing glycine and aldehydes, via a retro-aldol mechanism. This chain is Serine hydroxymethyltransferase, found in Methanocella arvoryzae (strain DSM 22066 / NBRC 105507 / MRE50).